A 209-amino-acid polypeptide reads, in one-letter code: Uracil phosphoribosyltransferase (209 aa).

5-phospho-alpha-D-ribose 1-diphosphate contacts are provided by residues Arg79, Arg104, and 131 to 139 (DPMLATGGS). Uracil is bound by residues Ile194 and 199–201 (GDA). Residue Asp200 coordinates 5-phospho-alpha-D-ribose 1-diphosphate.

Belongs to the UPRTase family. It depends on Mg(2+) as a cofactor.

It catalyses the reaction UMP + diphosphate = 5-phospho-alpha-D-ribose 1-diphosphate + uracil. The protein operates within pyrimidine metabolism; UMP biosynthesis via salvage pathway; UMP from uracil: step 1/1. Its activity is regulated as follows. Allosterically activated by GTP. Its function is as follows. Catalyzes the conversion of uracil and 5-phospho-alpha-D-ribose 1-diphosphate (PRPP) to UMP and diphosphate. This chain is Uracil phosphoribosyltransferase, found in Symbiobacterium thermophilum (strain DSM 24528 / JCM 14929 / IAM 14863 / T).